Reading from the N-terminus, the 84-residue chain is Small ribosomal subunit protein uS17 (84 aa).

It belongs to the universal ribosomal protein uS17 family. Part of the 30S ribosomal subunit.

In terms of biological role, one of the primary rRNA binding proteins, it binds specifically to the 5'-end of 16S ribosomal RNA. This is Small ribosomal subunit protein uS17 from Clostridium acetobutylicum (strain ATCC 824 / DSM 792 / JCM 1419 / IAM 19013 / LMG 5710 / NBRC 13948 / NRRL B-527 / VKM B-1787 / 2291 / W).